We begin with the raw amino-acid sequence, 366 residues long: Isopropyl malate dehydrogenase htyC (366 aa).

Residue 71 to 73 coordinates NADP(+); sequence VGG. Substrate is bound by residues R91 and R130. Positions 221, 246, and 250 each coordinate Mg(2+). 277 to 282 is a binding site for NADP(+); the sequence is GCVHGI.

Belongs to the isocitrate and isopropylmalate dehydrogenases family. As to quaternary structure, homodimer. Requires Mg(2+) as cofactor. The cofactor is Mn(2+).

The catalysed reaction is (2R,3S)-3-isopropylmalate + NAD(+) = 4-methyl-2-oxopentanoate + CO2 + NADH. Its pathway is antifungal biosynthesis. Its function is as follows. Isopropyl malate dehydrogenase; part of the gene cluster that mediates the de novo generation of L-homotyrosine from acetyl-CoA and 4-hydroxyphenyl-pyruvate. L-homotyrosine is a building block of echinocandin B, a fungal lipidated cyclic hexapeptide that acts as an antifungal agent. L-homotyrosine 4-hydroxyphenyl-pyruvate first undergoes an aldol-type condensation by htyA with the C-2 of acetyl-CoA followed by the release of CoA to form 2-(4-hydroxybenzyl)-malate. This is followed by isomerization of 2-(4-hydroxy-benzyl)-malate to 3-(4-hydroxybenzyl)-malate by htyD. Thereafter, 3-(4-hydroxybenzyl)-malate undergoes decarboxylation and oxidation to form 2-oxo-4-(4-hydroxybenzyl)butanoic acid, coupled to reduction of NAD(+) to NADH by htyC. The product then undergoes transamination catalyzed by htyB to form L-homotyrosine. The chain is Isopropyl malate dehydrogenase htyC from Aspergillus rugulosus (Emericella rugulosa).